The primary structure comprises 278 residues: Pyrroline-5-carboxylate reductase 2 (278 aa).

It belongs to the pyrroline-5-carboxylate reductase family.

The protein localises to the cytoplasm. The enzyme catalyses L-proline + NADP(+) = (S)-1-pyrroline-5-carboxylate + NADPH + 2 H(+). It catalyses the reaction L-proline + NAD(+) = (S)-1-pyrroline-5-carboxylate + NADH + 2 H(+). It functions in the pathway amino-acid biosynthesis; L-proline biosynthesis; L-proline from L-glutamate 5-semialdehyde: step 1/1. Catalyzes the reduction of 1-pyrroline-5-carboxylate (PCA) to L-proline. The chain is Pyrroline-5-carboxylate reductase 2 (proI) from Bacillus subtilis (strain 168).